The primary structure comprises 65 residues: Large ribosomal subunit protein bL35 (65 aa).

The disordered stretch occupies residues 1 to 26 (MPKIKTLRSAAKRFKKTESGKFKRKQ).

This sequence belongs to the bacterial ribosomal protein bL35 family.

The protein is Large ribosomal subunit protein bL35 of Buchnera aphidicola subsp. Baizongia pistaciae (strain Bp).